Here is a 570-residue protein sequence, read N- to C-terminus: MRRRSRMLLCFALLWVLGIAYYMYSGGGSALAAGGGGAGRKGDWNDIDSIKKKDLHHSRGDEKAQGVETLPPGKVRWPDFNQEAYVGGTMVRSGQDPYARNKFNQVESDKLHMDRGIPDTRHDQCQRKQWRVDLPATSVVITFHNEARSALLRTVVSVLKRSPPHLIKEIILVDDYSNDPEDGALLGKIEKVRVLRNDRREGLMRSRVRGADAAQAKVLTFLDSHCECNERWLEPLLERVAEDRTRVVSPIIDVINMDNFQYVGASADLKGGFDWNLVFKWDYMTPEQRRSRQGNPVAPIKTPMIAGGLFVMDKLYFEELGKYDMMMDVWGGENLEISFRVWQCGGSLEIIPCSRVGHVFRKQHPYTFPGGSGTVFARNTRRAAEVWMDEYKHFYYAAVPSARNVPYGNIQSRLELRKKLGCKPFKWYLDNVYPELRVPDHQDIAFGALQQGTNCLDTLGHFADGVVGIYECHNAGGNQEWALTKEKSVKHMDLCLTVVDRSPGSLIRLQGCRENDSRQKWEQIEGNSKLRHVGSNLCLDSRTAKSGGLSVEVCGPALSQQWKFSLNLQQ.

Over 1-6 the chain is Cytoplasmic; sequence MRRRSR. A helical; Signal-anchor for type II membrane protein membrane pass occupies residues 7–24; sequence MLLCFALLWVLGIAYYMY. Over 25–570 the chain is Lumenal; sequence SGGGSALAAG…QWKFSLNLQQ (546 aa). Ser29 carries an O-linked (Xyl...) (chondroitin sulfate) serine glycan. Intrachain disulfides connect Cys125–Cys353, Cys344–Cys422, Cys455–Cys472, and Cys495–Cys512. The catalytic subdomain A stretch occupies residues 134 to 239; sequence LPATSVVITF…ERWLEPLLER (106 aa). Positions 142, 175, and 200 each coordinate substrate. A Mn(2+)-binding site is contributed by Asp223. Ser224 provides a ligand contact to substrate. His225 serves as a coordination point for Mn(2+). The segment at 299–361 is catalytic subdomain B; it reads PIKTPMIAGG…PCSRVGHVFR (63 aa). Trp330 contributes to the substrate binding site. His358 contacts Mn(2+). Substrate is bound by residues Arg361, His364, and Tyr366. Residues 442–565 enclose the Ricin B-type lectin domain; it reads QDIAFGALQQ…PALSQQWKFS (124 aa). N-linked (GlcNAc...) asparagine glycosylation occurs at Asn515. Ser535 bears the Phosphoserine mark. Residues Cys538 and Cys554 are joined by a disulfide bond.

The protein belongs to the glycosyltransferase 2 family. GalNAc-T subfamily. The cofactor is Mn(2+). Widely expressed at high level.

The protein localises to the golgi apparatus. It localises to the golgi stack membrane. The protein resides in the secreted. The enzyme catalyses L-seryl-[protein] + UDP-N-acetyl-alpha-D-galactosamine = a 3-O-[N-acetyl-alpha-D-galactosaminyl]-L-seryl-[protein] + UDP + H(+). The catalysed reaction is L-threonyl-[protein] + UDP-N-acetyl-alpha-D-galactosamine = a 3-O-[N-acetyl-alpha-D-galactosaminyl]-L-threonyl-[protein] + UDP + H(+). It functions in the pathway protein modification; protein glycosylation. Catalyzes the initial reaction in O-linked oligosaccharide biosynthesis, the transfer of an N-acetyl-D-galactosamine residue to a serine or threonine residue on the protein receptor. Has a broad spectrum of substrates for peptides such as EA2, Muc5AC, Muc1a, Muc1b. Probably involved in O-linked glycosylation of the immunoglobulin A1 (IgA1) hinge region. Involved in O-linked glycosylation of APOC-III, ANGPTL3 and PLTP. It participates in the regulation of HDL-C metabolism. This Mus musculus (Mouse) protein is Polypeptide N-acetylgalactosaminyltransferase 2 (Galnt2).